Reading from the N-terminus, the 691-residue chain is Elongation factor G (691 aa).

In terms of domain architecture, tr-type G spans 8–282; that stretch reads ERVRNIGIAA…AVVDYLPAPV (275 aa). Residues 17–24, 81–85, and 135–138 each bind GTP; these read AHIDAGKT, DTPGH, and NKMD.

The protein belongs to the TRAFAC class translation factor GTPase superfamily. Classic translation factor GTPase family. EF-G/EF-2 subfamily.

It is found in the cytoplasm. In terms of biological role, catalyzes the GTP-dependent ribosomal translocation step during translation elongation. During this step, the ribosome changes from the pre-translocational (PRE) to the post-translocational (POST) state as the newly formed A-site-bound peptidyl-tRNA and P-site-bound deacylated tRNA move to the P and E sites, respectively. Catalyzes the coordinated movement of the two tRNA molecules, the mRNA and conformational changes in the ribosome. This Prochlorococcus marinus (strain MIT 9211) protein is Elongation factor G.